We begin with the raw amino-acid sequence, 379 residues long: Cytochrome b (379 aa).

4 consecutive transmembrane segments (helical) span residues 33–53, 77–98, 113–133, and 178–198; these read FGSLLGMCLMIQILTGLFLAM, WLIRYLHANGASMFFICLFIHV, WNIGIILFLMTMATAFVGYVL, and FFAFHFILPFIIAAFALVHLL. His-83 and His-97 together coordinate heme b. Heme b is bound by residues His-182 and His-196. His-201 is an a ubiquinone binding site. Transmembrane regions (helical) follow at residues 226–246, 288–308, 320–340, and 347–367; these read TKDLLGIFLLLLVLMILALFF, LGGVLALILSILILAAFPLLN, VTQVIYWIFTANLLVLTWIGG, and FTMIGQIASITYLAIIIILMP.

The protein belongs to the cytochrome b family. The cytochrome bc1 complex contains 11 subunits: 3 respiratory subunits (MT-CYB, CYC1 and UQCRFS1), 2 core proteins (UQCRC1 and UQCRC2) and 6 low-molecular weight proteins (UQCRH/QCR6, UQCRB/QCR7, UQCRQ/QCR8, UQCR10/QCR9, UQCR11/QCR10 and a cleavage product of UQCRFS1). This cytochrome bc1 complex then forms a dimer. Heme b serves as cofactor.

The protein localises to the mitochondrion inner membrane. Its function is as follows. Component of the ubiquinol-cytochrome c reductase complex (complex III or cytochrome b-c1 complex) that is part of the mitochondrial respiratory chain. The b-c1 complex mediates electron transfer from ubiquinol to cytochrome c. Contributes to the generation of a proton gradient across the mitochondrial membrane that is then used for ATP synthesis. The protein is Cytochrome b (MT-CYB) of Akodon kofordi (Koford's grass mouse).